The chain runs to 512 residues: Maturase K (512 aa).

The protein belongs to the intron maturase 2 family. MatK subfamily.

It is found in the plastid. It localises to the chloroplast. Functionally, usually encoded in the trnK tRNA gene intron. Probably assists in splicing its own and other chloroplast group II introns. The protein is Maturase K of Lemna aequinoctialis (Lesser duckweed).